A 368-amino-acid chain; its full sequence is Core-capsid bridging protein (368 aa).

2 disordered regions span residues 17-49 (EIYG…DELD) and 307-340 (GYRG…QPVL). Basic and acidic residues predominate over residues 22–31 (PKKEEQDYKP). 2 stretches are compositionally biased toward basic residues: residues 32–41 (RKLKRVKKKK) and 314–337 (RPRR…RRRQ).

It belongs to the adenoviridae core-capsid bridging protein family. Monomer. Homodimer. Exists in equilibrium between monomers and dimers in solution. Interacts with the histone-like nucleoprotein; this interactions bridge the virus core to the capsid. Interacts with core protein X; this interactions bridge the virus core to the capsid. Interacts with the endosome lysis protein VI; this interactions bridge the virus core to the capsid. Interacts with the peripentonal hexons. Interacts with host NPM1; this interaction might play a role in virus assembly. In terms of processing, during virion entry, is ubiquitinated at the nuclear pore complex by host MIB1. This dissociates viral genomic DNA from capsid and allows genome delivery into nucleus for infection.

It localises to the virion. It is found in the host nucleus. The protein resides in the host nucleolus. Functionally, associates loosely with the viral DNA to form an outer shell around the nucleoprotein-DNA complex and links it with the capsid by binding the endosome lysis protein. During entry, secures the viral genome in the capsid until it reaches the nuclear pore complex, preventing innate immunity responses. Dissociates from the viral genome at nuclear pore. Might be involved in nuclear capsid assembly of the viral particles through its association with NPM1/nucleophosmin. This is Core-capsid bridging protein from Human adenovirus C serotype 5 (HAdV-5).